A 409-amino-acid polypeptide reads, in one-letter code: Protein naked cuticle homolog 2 (409 aa).

The N-myristoyl glycine moiety is linked to residue Gly2. An EF-hand domain is found at 109–144 (AEDNRQEWVFTLYDFDNSGKVTKEDMSSLMHTIYDV). The Ca(2+) site is built by Asp122, Asp124, Ser126, Lys128, and Asp133. Disordered regions lie at residues 160-224 (LRVK…YCVD), 243-315 (TSRF…RYPG), 346-366 (SHTHAHTPSGLQHSHSRRIRS), and 388-409 (RHEHHHHHEHHHHHHYHHYHQT). 2 stretches are compositionally biased toward basic and acidic residues: residues 171-185 (AARRRDATHTERETS) and 193-224 (VRSEEHRSADRRQSTHIRGQTEAHEGNHYCVD). The span at 247–268 (DSSSPDADQDPPSRSSHSQSRP) shows a compositional bias: low complexity. A compositionally biased stretch (basic residues) spans 389–409 (HEHHHHHEHHHHHHYHHYHQT).

The protein belongs to the NKD family. In terms of tissue distribution, expressed ubiquitously until 1 dpf, when expression becomes confined to the anterior CNS, with slight expression in the developing tail.

It is found in the cell membrane. The protein localises to the cytoplasm. In terms of biological role, cell autonomous antagonist of both the canonical and non-canonical Wnt signaling pathways. The polypeptide is Protein naked cuticle homolog 2 (nkd2) (Danio rerio (Zebrafish)).